The following is a 164-amino-acid chain: Large ribosomal subunit protein bL19 (164 aa).

A disordered region spans residues 144–164 (EAEKQTEVQAEPKIEKSEEKK).

Belongs to the bacterial ribosomal protein bL19 family.

Its function is as follows. This protein is located at the 30S-50S ribosomal subunit interface and may play a role in the structure and function of the aminoacyl-tRNA binding site. This is Large ribosomal subunit protein bL19 from Pelagibacter ubique (strain HTCC1062).